Consider the following 476-residue polypeptide: Sulfate adenylyltransferase subunit 1 (476 aa).

The region spanning 17–232 (KDLLRLLTAG…LETVHIDSDN (216 aa)) is the tr-type G domain. Residues 26-33 (GSVDDGKS) form a G1 region. A GTP-binding site is contributed by 26–33 (GSVDDGKS). Positions 84–88 (GITID) are G2. The tract at residues 105–108 (DTPG) is G3. GTP contacts are provided by residues 105-109 (DTPGH) and 160-163 (NKMD). Residues 160 to 163 (NKMD) form a G4 region. The tract at residues 197–199 (SAL) is G5.

Belongs to the TRAFAC class translation factor GTPase superfamily. Classic translation factor GTPase family. CysN/NodQ subfamily. Heterodimer composed of CysD, the smaller subunit, and CysN.

It carries out the reaction sulfate + ATP + H(+) = adenosine 5'-phosphosulfate + diphosphate. The protein operates within sulfur metabolism; hydrogen sulfide biosynthesis; sulfite from sulfate: step 1/3. With CysD forms the ATP sulfurylase (ATPS) that catalyzes the adenylation of sulfate producing adenosine 5'-phosphosulfate (APS) and diphosphate, the first enzymatic step in sulfur assimilation pathway. APS synthesis involves the formation of a high-energy phosphoric-sulfuric acid anhydride bond driven by GTP hydrolysis by CysN coupled to ATP hydrolysis by CysD. This Bacteroides fragilis (strain YCH46) protein is Sulfate adenylyltransferase subunit 1.